A 512-amino-acid polypeptide reads, in one-letter code: Cytochrome P450 72A15 (512 aa).

The chain crosses the membrane as a helical span at residues 2–22 (EISVASVTISVVLAVVSWWIW). Cys460 is a heme binding site.

Belongs to the cytochrome P450 family. Heme is required as a cofactor.

It localises to the membrane. The polypeptide is Cytochrome P450 72A15 (CYP72A15) (Arabidopsis thaliana (Mouse-ear cress)).